The following is a 343-amino-acid chain: Anthranilate phosphoribosyltransferase (343 aa).

5-phospho-alpha-D-ribose 1-diphosphate-binding positions include G84, 87-88, T92, 94-97, 112-120, and S124; these read GD, NIST, and KHGNRSVSS. Position 84 (G84) interacts with anthranilate. S96 lines the Mg(2+) pocket. Position 115 (N115) interacts with anthranilate. Position 170 (R170) interacts with anthranilate. Positions 229 and 230 each coordinate Mg(2+).

This sequence belongs to the anthranilate phosphoribosyltransferase family. In terms of assembly, homodimer. Requires Mg(2+) as cofactor.

The enzyme catalyses N-(5-phospho-beta-D-ribosyl)anthranilate + diphosphate = 5-phospho-alpha-D-ribose 1-diphosphate + anthranilate. The protein operates within amino-acid biosynthesis; L-tryptophan biosynthesis; L-tryptophan from chorismate: step 2/5. Functionally, catalyzes the transfer of the phosphoribosyl group of 5-phosphorylribose-1-pyrophosphate (PRPP) to anthranilate to yield N-(5'-phosphoribosyl)-anthranilate (PRA). In Stenotrophomonas maltophilia (strain K279a), this protein is Anthranilate phosphoribosyltransferase.